Here is a 320-residue protein sequence, read N- to C-terminus: MQMRNTFSWIKEEIIRFIAVSLIIYIITRAPISNAYPIFAQQSYENPREATGRIVCANCHLANKPVDIEVPQAVLPDTVFEAVVRIPYDLQLKQVLANGKKGALNVGAVLILPEGFELAPPDRISPEIKEKISNLSFQSYRPTKKNILVIGPVPGQKYSEITFPILSPDPATKKDVHFLKYPIYVGGNRGRGQIYPDGSKSNNNVYNATSAGIVSKIIRKEKGGYEITIVDASDGRQVVDIIPPGPELLVSEGESIKLDQPLTSNPNVGGFGQGDAEIVLQDPLRVQGLLLFLASIILAQIFLVLKKKQFEKVQLSEMNF.

Positions 1–35 (MQMRNTFSWIKEEIIRFIAVSLIIYIITRAPISNA) are cleaved as a signal peptide. Tyrosine 36, cysteine 56, cysteine 59, and histidine 60 together coordinate heme. Residues 286–306 (VQGLLLFLASIILAQIFLVLK) form a helical membrane-spanning segment.

This sequence belongs to the cytochrome f family. As to quaternary structure, the 4 large subunits of the cytochrome b6-f complex are cytochrome b6, subunit IV (17 kDa polypeptide, petD), cytochrome f and the Rieske protein, while the 4 small subunits are PetG, PetL, PetM and PetN. The complex functions as a dimer. Heme is required as a cofactor.

It is found in the plastid. It localises to the chloroplast thylakoid membrane. Component of the cytochrome b6-f complex, which mediates electron transfer between photosystem II (PSII) and photosystem I (PSI), cyclic electron flow around PSI, and state transitions. The polypeptide is Cytochrome f (Morus indica (Mulberry)).